The following is a 467-amino-acid chain: Cysteine--tRNA ligase (467 aa).

C27 provides a ligand contact to Zn(2+). Positions P29–N39 match the 'HIGH' region motif. Zn(2+)-binding residues include C207, H232, and E236. The 'KMSKS' region signature appears at K264–S268. ATP is bound at residue K267.

This sequence belongs to the class-I aminoacyl-tRNA synthetase family. Monomer. The cofactor is Zn(2+).

The protein resides in the cytoplasm. The catalysed reaction is tRNA(Cys) + L-cysteine + ATP = L-cysteinyl-tRNA(Cys) + AMP + diphosphate. This chain is Cysteine--tRNA ligase, found in Caldanaerobacter subterraneus subsp. tengcongensis (strain DSM 15242 / JCM 11007 / NBRC 100824 / MB4) (Thermoanaerobacter tengcongensis).